The chain runs to 304 residues: Phosphatidylinositol mannoside acyltransferase (304 aa).

The active-site Proton acceptor is histidine 126. Hexadecanoyl-CoA is bound by residues histidine 126 and arginine 164. Glutamate 200 is a catalytic residue. Residues serine 206 and glutamate 229 each contribute to the hexadecanoyl-CoA site.

The protein belongs to the LpxL/LpxM/LpxP family. In terms of assembly, monomer.

It localises to the cell inner membrane. The enzyme catalyses a 2,6-O-bis(alpha-D-mannopyranosyl)-1-phosphatidyl-1D-myo-inositol + an acyl-CoA = a 2-O-(alpha-D-mannosyl)-6-O-(6-O-acyl-alpha-D-mannosyl)-1-phosphatidyl-1D-myo-inositol + CoA. It catalyses the reaction a 1,2-diacyl-sn-glycero-3-phospho-[alpha-D-mannopyranosyl-(1&lt;-&gt;6)-D-myo-inositol] + an acyl-CoA = a 1,2-diacyl-sn-glycero-3-phospho-[alpha-D-6-acyl-mannopyranosyl-(1&lt;-&gt;6)-D-myo-inositol] + CoA. Its pathway is phospholipid metabolism; phosphatidylinositol metabolism. Functionally, catalyzes the transfer of a palmitoyl moiety from palmitoyl-CoA to the 6-position of the mannose ring linked to the 2-position of myo-inositol in phosphatidyl-myo-inositol monomannoside (PIM1) or dimannoside (PIM2). This chain is Phosphatidylinositol mannoside acyltransferase, found in Mycolicibacterium smegmatis (strain ATCC 700084 / mc(2)155) (Mycobacterium smegmatis).